The sequence spans 407 residues: Cathepsin D (407 aa).

Residues 1–20 form the signal peptide; it reads MQTPGVLLLILGLLDASSSA. Residues 21–64 constitute a propeptide, activation peptide; that stretch reads LIRIPLRKFTSIRRTMTEVGGSVEDLILKGPITKYSMQSSPRTK. The Peptidase A1 domain maps to 79 to 402; sequence YYGEIGIGTP…DREYNRVGFA (324 aa). 2 cysteine pairs are disulfide-bonded: Cys-91/Cys-160 and Cys-110/Cys-117. Asp-97 is a catalytic residue. Asn-134 and Asn-258 each carry an N-linked (GlcNAc...) asparagine glycan. Cys-281 and Cys-285 are oxidised to a cystine. Asp-290 is an active-site residue. An intrachain disulfide couples Cys-324 to Cys-361.

This sequence belongs to the peptidase A1 family. Occurs as a mixture of both a single chain form and two types of two chain (light and heavy) forms. Interacts with ADAM30; this leads to activation of CTSD. N- and O-glycosylated. Post-translationally, undergoes proteolytic cleavage and activation by ADAM30.

The protein resides in the lysosome. It localises to the melanosome. Its subcellular location is the secreted. It is found in the extracellular space. It catalyses the reaction Specificity similar to, but narrower than, that of pepsin A. Does not cleave the 4-Gln-|-His-5 bond in B chain of insulin.. Acid protease active in intracellular protein breakdown. Plays a role in APP processing following cleavage and activation by ADAM30 which leads to APP degradation. The protein is Cathepsin D (Ctsd) of Rattus norvegicus (Rat).